A 376-amino-acid polypeptide reads, in one-letter code: MAKKSNSKKSTPVSTPSKEKKKVIEKKSSTAIPRERVIKAVNELIKFTSKPQDENNEEGNNGKKNLLEDDEEELKKDLQLIVVNNKSFTGTSKSFKLKLLNVKHSFYKPWKEASATAVKDFKVLLILKDSDIKKVSEDDLFDQLDSEGIKVDEIICGKDLKTVYKAYEARNAFISQFSLILADDSIVTSLPKLMGGKAYNKVETTPISIRTHANKEFSLTTLTNNIKKVYMNQLPVKLPRGTTLNVHLGNLEWLRPEEFVDNVELISEQLIKAYQIRSIFIKTNRSPVLPLYYNQDVLDELEAKKDKIEETHEDDMVTIDGVQVHLSTFNKGLMEIANPSELGSIFSKQINNAKKRSSSELEKESSESEAVKKAKS.

Disordered stretches follow at residues Met-1–Ser-29 and Arg-356–Ser-376. A required for interaction with CDC4 region spans residues Glu-310–Ser-376. A compositionally biased stretch (basic and acidic residues) spans Ser-357 to Ser-376.

As to quaternary structure, interacts with CDC4, PRE4, PRE6, RPT1 and SCL1 as part of the fully assembled 26S proteasome. Interacts with pre-ribosomal particles constituent NOP7.

It localises to the nucleus. Its subcellular location is the nucleolus. An adapter protein that specifically links the 26S proteasome to its substrate CDC4 which is one of the substrate recognition subunits of the SCF E3 ubiquitin ligase complex. Required for turnover of cell cycle regulatory proteins CDC4 and GRR1. Required for synthesis and nuclear export of 60S ribosomal subunits. Required for vegetative growth. This chain is Proteasome-interacting protein CIC1 (CIC1), found in Saccharomyces cerevisiae (strain ATCC 204508 / S288c) (Baker's yeast).